Here is a 388-residue protein sequence, read N- to C-terminus: Chorismate synthase (388 aa).

Arginine 39 and arginine 45 together coordinate NADP(+). FMN contacts are provided by residues 132–134, 251–252, glycine 296, 311–315, and arginine 337; these read RSS, NA, and KPIPT.

Belongs to the chorismate synthase family. As to quaternary structure, homotetramer. The cofactor is FMNH2.

It carries out the reaction 5-O-(1-carboxyvinyl)-3-phosphoshikimate = chorismate + phosphate. The protein operates within metabolic intermediate biosynthesis; chorismate biosynthesis; chorismate from D-erythrose 4-phosphate and phosphoenolpyruvate: step 7/7. Functionally, catalyzes the anti-1,4-elimination of the C-3 phosphate and the C-6 proR hydrogen from 5-enolpyruvylshikimate-3-phosphate (EPSP) to yield chorismate, which is the branch point compound that serves as the starting substrate for the three terminal pathways of aromatic amino acid biosynthesis. This reaction introduces a second double bond into the aromatic ring system. The polypeptide is Chorismate synthase (Staphylococcus aureus (strain MW2)).